Consider the following 116-residue polypeptide: Protein Wnt-5a (116 aa).

A lipid anchor (O-palmitoleoyl serine; by PORCN) is attached at S1. N-linked (GlcNAc...) asparagine glycosylation is found at N69 and N83. A disulfide bond links C82 and C97.

It belongs to the Wnt family. In terms of processing, palmitoleoylation is required for efficient binding to frizzled receptors. Depalmitoleoylation leads to Wnt signaling pathway inhibition.

It localises to the secreted. The protein resides in the extracellular space. Its subcellular location is the extracellular matrix. Functionally, ligand for members of the frizzled family of seven transmembrane receptors. Can activate or inhibit canonical Wnt signaling, depending on receptor context. Required during embryogenesis for extension of the primary anterior-posterior axis. The protein is Protein Wnt-5a (WNT-5A) of Plestiodon skiltonianus (Western skink).